We begin with the raw amino-acid sequence, 250 residues long: Probable transcriptional regulatory protein Lferr_0060 (250 aa).

It belongs to the TACO1 family.

The protein resides in the cytoplasm. This is Probable transcriptional regulatory protein Lferr_0060 from Acidithiobacillus ferrooxidans (strain ATCC 53993 / BNL-5-31) (Leptospirillum ferrooxidans (ATCC 53993)).